Consider the following 919-residue polypeptide: Synphilin-1 (919 aa).

3 disordered regions span residues 80–99 (SPLKHQPETLENNESDDQKN), 108–140 (GGESDLGPQPQELGPGDGVGGPPGKSSEPSTSL), and 287–313 (SSAAESKPEEQVSGLNRTSSQGPEERS). Residues 299 to 308 (SGLNRTSSQG) show a composition bias toward polar residues. ANK repeat units follow at residues 349 to 380 (NGNNLLHIAASQGHAECLQHLTSLMGEDCLNE), 384 to 413 (EKLTPAGLAIKNGQLECVRWMVSETEAIAE), 419 to 448 (DFPSLIHYAGCYGQEKILLWLLQFMQEQGI), and 456 to 485 (DGNSAVHVASQHGYLGCIQTLVEYGANVTM). Residues 515 to 552 (CMSLASQVVKLTKQLKEQTVERVTLQNQLQQFLEAQKS) are a coiled coil. 3 disordered regions span residues 549–615 (AQKS…KDED), 666–713 (RLRQ…SMDS), and 728–919 (SGGR…NKAA). Residues 555-571 (KSLPSSPSSPSSPASRK) show a composition bias toward low complexity. Residues 603-632 (ASSRARPKAKDEDSDKILRQLLGKEISENV) form an ANK 5 repeat. Low complexity predominate over residues 667-685 (LRQLMQRSLSESDTDSNNS). Basic and acidic residues predominate over residues 686 to 700 (EDPKTTPVRKADRPR). One copy of the ANK 6 repeat lies at 699-729 (PRPQPIVESVESMDSAESLHLMIKKHTLASG). The span at 774-785 (PSGDPQQPSPDS) shows a compositional bias: low complexity. Over residues 833–842 (NGEKDKDKGR) the composition is skewed to basic and acidic residues. A compositionally biased stretch (polar residues) spans 844–854 (LQRTSTSNESG). Positions 874–886 (NQNNNNNYQAANQ) are enriched in low complexity.

Homodimer. Heterodimer of isoform 1 and isoform 2. Interacts with SIAH1, SIAH2, SNCA, RNF19A and PRKN. Isoform 2 has a strong tendency to form aggregates and can sequester isoform 1. Ubiquitinated; mediated by SIAH1, SIAH2 or RNF19A and leading to its subsequent proteasomal degradation. In the absence of proteasomal degradation, ubiquitinated SNCAIP accumulates in cytoplasmic inclusion bodies. Isoform 2 is subject to limited ubiquitination that does not lead to proteasomal degradation. As to expression, detected in brain (at protein level). Widely expressed, with highest levels in brain, heart and placenta.

The protein localises to the cytoplasm. Its function is as follows. Isoform 2 inhibits the ubiquitin ligase activity of SIAH1 and inhibits proteasomal degradation of target proteins. Isoform 2 inhibits autoubiquitination and proteasomal degradation of SIAH1, and thereby increases cellular levels of SIAH. Isoform 2 modulates SNCA monoubiquitination by SIAH1. This chain is Synphilin-1 (SNCAIP), found in Homo sapiens (Human).